Consider the following 20-residue polypeptide: FLAKKVAKKLVSHVAQKQME.

Glutamic acid 1-amide is present on Glu20.

Expressed by the venom gland.

It localises to the secreted. The polypeptide is Short cationic peptide-4c (Cupiennius salei (American wandering spider)).